Consider the following 444-residue polypeptide: Tol-Pal system protein TolB (444 aa).

Residues 1–19 form the signal peptide; sequence MRNIIYFILSLLFSVTSYA.

It belongs to the TolB family. As to quaternary structure, the Tol-Pal system is composed of five core proteins: the inner membrane proteins TolA, TolQ and TolR, the periplasmic protein TolB and the outer membrane protein Pal. They form a network linking the inner and outer membranes and the peptidoglycan layer.

The protein resides in the periplasm. Functionally, part of the Tol-Pal system, which plays a role in outer membrane invagination during cell division and is important for maintaining outer membrane integrity. The protein is Tol-Pal system protein TolB of Rickettsia conorii (strain ATCC VR-613 / Malish 7).